We begin with the raw amino-acid sequence, 320 residues long: L-lactate dehydrogenase (320 aa).

Residues 15-16 (FV), D37, K42, Y68, and 82-83 (GA) each bind NAD(+). Substrate contacts are provided by residues Q85, R91, and 123 to 126 (NPVD). NAD(+) is bound by residues 121-123 (ATN) and S146. 151–154 (DSAR) contributes to the substrate binding site. Residues R156 and 168 to 172 (QNVHA) each bind beta-D-fructose 1,6-bisphosphate. The active-site Proton acceptor is the H178. Y223 is modified (phosphotyrosine). T232 is a binding site for substrate.

Belongs to the LDH/MDH superfamily. LDH family. As to quaternary structure, homotetramer.

The protein resides in the cytoplasm. It catalyses the reaction (S)-lactate + NAD(+) = pyruvate + NADH + H(+). It participates in fermentation; pyruvate fermentation to lactate; (S)-lactate from pyruvate: step 1/1. With respect to regulation, allosterically activated by fructose 1,6-bisphosphate (FBP). Functionally, catalyzes the conversion of lactate to pyruvate. This Bacillus subtilis (strain 168) protein is L-lactate dehydrogenase.